Consider the following 387-residue polypeptide: S-adenosylmethionine synthase (387 aa).

ATP is bound at residue His-16. Residue Asp-18 participates in Mg(2+) binding. Glu-44 contacts K(+). 2 residues coordinate L-methionine: Glu-57 and Gln-100. The interval 100-110 (QSPDIAQGVDE) is flexible loop. ATP contacts are provided by residues 167-169 (DAK), 232-233 (RF), Asp-241, 247-248 (RK), Ala-264, and Lys-268. Asp-241 provides a ligand contact to L-methionine. Lys-272 is an L-methionine binding site.

The protein belongs to the AdoMet synthase family. As to quaternary structure, homotetramer; dimer of dimers. Requires Mg(2+) as cofactor. K(+) is required as a cofactor.

The protein localises to the cytoplasm. The catalysed reaction is L-methionine + ATP + H2O = S-adenosyl-L-methionine + phosphate + diphosphate. It participates in amino-acid biosynthesis; S-adenosyl-L-methionine biosynthesis; S-adenosyl-L-methionine from L-methionine: step 1/1. Catalyzes the formation of S-adenosylmethionine (AdoMet) from methionine and ATP. The overall synthetic reaction is composed of two sequential steps, AdoMet formation and the subsequent tripolyphosphate hydrolysis which occurs prior to release of AdoMet from the enzyme. This is S-adenosylmethionine synthase from Janthinobacterium sp. (strain Marseille) (Minibacterium massiliensis).